Here is a 333-residue protein sequence, read N- to C-terminus: Beta-ketoacyl-[acyl-carrier-protein] synthase III (333 aa).

Residues Cys-114 and His-255 contribute to the active site. An ACP-binding region spans residues 256–260; sequence QANYR. Asn-285 is an active-site residue.

The protein belongs to the thiolase-like superfamily. FabH family. As to quaternary structure, homodimer.

Its subcellular location is the cytoplasm. The enzyme catalyses malonyl-[ACP] + acetyl-CoA + H(+) = 3-oxobutanoyl-[ACP] + CO2 + CoA. It participates in lipid metabolism; fatty acid biosynthesis. Functionally, catalyzes the condensation reaction of fatty acid synthesis by the addition to an acyl acceptor of two carbons from malonyl-ACP. Catalyzes the first condensation reaction which initiates fatty acid synthesis and may therefore play a role in governing the total rate of fatty acid production. Possesses both acetoacetyl-ACP synthase and acetyl transacylase activities. Its substrate specificity determines the biosynthesis of branched-chain and/or straight-chain of fatty acids. This Aliarcobacter butzleri (strain RM4018) (Arcobacter butzleri) protein is Beta-ketoacyl-[acyl-carrier-protein] synthase III.